Reading from the N-terminus, the 89-residue chain is Probable oxaloacetate decarboxylase gamma chain (89 aa).

The chain crosses the membrane as a helical span at residues 13–33; the sequence is LMLSGMGFVITFLLILIWAIT.

This sequence belongs to the OadG family. As to quaternary structure, heterotrimer of an alpha, a beta and a gamma subunit. Na(+) serves as cofactor.

It localises to the cell membrane. The enzyme catalyses oxaloacetate + 2 Na(+)(in) + H(+) = pyruvate + 2 Na(+)(out) + CO2. Catalyzes the decarboxylation of oxaloacetate coupled to Na(+) translocation. The protein is Probable oxaloacetate decarboxylase gamma chain of Actinobacillus succinogenes (strain ATCC 55618 / DSM 22257 / CCUG 43843 / 130Z).